Reading from the N-terminus, the 382-residue chain is FK506-binding protein 4 (382 aa).

The tract at residues 139 to 274 (GLEVDEEIES…KEEPKKKITK (136 aa)) is disordered. Residues 141 to 173 (EVDEEIESDEEVESDEEIESDEEIESEEEEEEP) show a composition bias toward acidic residues. Composition is skewed to basic and acidic residues over residues 180–190 (RPAEEVKEIAS) and 196–270 (EKKE…EPKK). One can recognise a PPIase FKBP-type domain in the interval 295-382 (GQRVGMRYIG…VFDVKLLSMK (88 aa)).

The protein belongs to the FKBP-type PPIase family. FKBP3/4 subfamily. Binds to histones H3 and H4.

It localises to the nucleus. It carries out the reaction [protein]-peptidylproline (omega=180) = [protein]-peptidylproline (omega=0). Its activity is regulated as follows. Inhibited by both FK506 and rapamycin. Functionally, PPIase that acts as a histone chaperone. Histone proline isomerase that increases the rate of cis-trans isomerization at prolines on the histone H3 N-terminal tail. Proline isomerization influences H3 methylation thereby regulating gene expression. The protein is FK506-binding protein 4 (FKBP4) of Rhizopus delemar (strain RA 99-880 / ATCC MYA-4621 / FGSC 9543 / NRRL 43880) (Mucormycosis agent).